A 279-amino-acid chain; its full sequence is NAD kinase (279 aa).

Residue aspartate 61 is the Proton acceptor of the active site. NAD(+)-binding positions include 61 to 62, 138 to 139, lysine 149, lysine 166, aspartate 168, and 179 to 184; these read DG, ND, and TGYSFS.

This sequence belongs to the NAD kinase family. A divalent metal cation serves as cofactor.

The protein resides in the cytoplasm. It catalyses the reaction NAD(+) + ATP = ADP + NADP(+) + H(+). Functionally, involved in the regulation of the intracellular balance of NAD and NADP, and is a key enzyme in the biosynthesis of NADP. Catalyzes specifically the phosphorylation on 2'-hydroxyl of the adenosine moiety of NAD to yield NADP. In Borrelia garinii subsp. bavariensis (strain ATCC BAA-2496 / DSM 23469 / PBi) (Borreliella bavariensis), this protein is NAD kinase.